A 147-amino-acid chain; its full sequence is Ribosomal RNA large subunit methyltransferase H (147 aa).

S-adenosyl-L-methionine contacts are provided by residues Leu-64, Gly-95, and 114–119 (LSSLTL).

Belongs to the RNA methyltransferase RlmH family. Homodimer.

The protein resides in the cytoplasm. The enzyme catalyses pseudouridine(1915) in 23S rRNA + S-adenosyl-L-methionine = N(3)-methylpseudouridine(1915) in 23S rRNA + S-adenosyl-L-homocysteine + H(+). Functionally, specifically methylates the pseudouridine at position 1915 (m3Psi1915) in 23S rRNA. In Polynucleobacter asymbioticus (strain DSM 18221 / CIP 109841 / QLW-P1DMWA-1) (Polynucleobacter necessarius subsp. asymbioticus), this protein is Ribosomal RNA large subunit methyltransferase H.